Consider the following 281-residue polypeptide: Tumor necrosis factor ligand superfamily member 10 (281 aa).

Topologically, residues 1 to 17 (MAMMEVQGGPSLGQTCV) are cytoplasmic. The chain crosses the membrane as a helical; Signal-anchor for type II membrane protein span at residues 18-38 (LIVIFTVLLQSLCVAVTYVYF). At 39 to 281 (TNELKQMQDK…ASFFGAFLVG (243 aa)) the chain is on the extracellular side. One can recognise a THD domain in the interval 122 to 280 (VAAHITGTRG…EASFFGAFLV (159 aa)). Residues 124-144 (AHITGTRGRSNTLSSPNSKNE) are disordered. The segment covering 130 to 141 (RGRSNTLSSPNS) has biased composition (polar residues). Residue Cys-230 coordinates Zn(2+).

It belongs to the tumor necrosis factor family. As to quaternary structure, homotrimer. One TNFSF10 homotrimer interacts with three TNFSF10A mononers. One TNFSF10 homotrimer interacts with three TNFSF10B mononers. Tyrosine phosphorylated by PKDCC/VLK. As to expression, widespread; most predominant in spleen, lung and prostate.

It localises to the cell membrane. It is found in the secreted. Functionally, cytokine that binds to TNFRSF10A/TRAILR1, TNFRSF10B/TRAILR2, TNFRSF10C/TRAILR3, TNFRSF10D/TRAILR4 and possibly also to TNFRSF11B/OPG. Induces apoptosis. Its activity may be modulated by binding to the decoy receptors TNFRSF10C/TRAILR3, TNFRSF10D/TRAILR4 and TNFRSF11B/OPG that cannot induce apoptosis. The sequence is that of Tumor necrosis factor ligand superfamily member 10 (TNFSF10) from Homo sapiens (Human).